The chain runs to 69 residues: VLIIAVLFLTACQLTTAETYSRGRQKHRARRSTDKNSKWTRECTRSGGACNSHTQCCDHFCSTATSTCI.

The signal sequence occupies residues 1-17 (VLIIAVLFLTACQLTTA). Residues 18–41 (ETYSRGRQKHRARRSTDKNSKWTR) constitute a propeptide that is removed on maturation. Intrachain disulfides connect C43–C57, C50–C61, and C56–C68.

This sequence belongs to the conotoxin O1 superfamily. As to expression, expressed by the venom duct.

Its subcellular location is the secreted. In Conus ebraeus (Hebrew cone), this protein is Conotoxin Eb6.20 (E1).